A 491-amino-acid chain; its full sequence is Immediate early protein IE1 (491 aa).

Over residues 1-11 (MESSAKRKMDP) the composition is skewed to basic and acidic residues. A nuclear localization signal region spans residues 1 to 24 (MESSAKRKMDPDNPDEGPSSKVPR). A disordered region spans residues 1 to 30 (MESSAKRKMDPDNPDEGPSSKVPRPETPVT). Positions 132–346 (ILDKVHEPFE…SVMKRRIEEI (215 aa)) are interaction with host PML, interference with PML sumoylation and disruption of PML-associated nuclear bodies. An interaction with host STAT2 region spans residues 373–445 (AIAEESDEEE…EEGAQEERED (73 aa)). Residues 410–420 (ATIPLSSVIVA) are modulation of STAT3/STAT1 signaling. The tract at residues 410–445 (ATIPLSSVIVAENSDQEESEQSDEEEEEGAQEERED) is interaction with host STAT3. The acidic stretch occupies residues 421–472 (ENSDQEESEQSDEEEEEGAQEEREDTVSVKSEPVSEIEEVAPEEEEDGAEEP). The disordered stretch occupies residues 421–491 (ENSDQEESEQ…PMVTRSKADQ (71 aa)). The span at 423–444 (SDQEESEQSDEEEEEGAQEERE) shows a compositional bias: acidic residues. The segment at 449 to 452 (VKSE) is interaction with host SUMO1. Lys450 is covalently cross-linked (Glycyl lysine isopeptide (Lys-Gly) (interchain with G-Cter in SUMO)). Residues 455–470 (SEIEEVAPEEEEDGAE) are compositionally biased toward acidic residues. The tract at residues 475–491 (SGGKSTHPMVTRSKADQ) is chromosome-tethering domain (CTD), binding to histones.

Belongs to the HHV-5 IE1 protein family. As to quaternary structure, forms homodimers. Interacts with human p53/TP53; this interaction inhibits p53/TP53-dependent transactivation activity. Interacts with host STAT1. Interacts with host STAT2; this interaction promotes viral growth and counteracts the antiviral interferon response. May also interact with the host STAT1-STAT2 heterodimer. Interacts with host STAT3; this interaction leads to STAT3 nuclear accumulation and disruption of IL6-induced STAT3 phosphorylation. Interacts with host PML; this interaction inhibits host PML de novo sumoylation and probably inhibits PML regulation of type I and type II interferon-induced gene expression. Interacts with host DAXX. Interacts with host SP100. Interacts with host E2F1. Interacts with host RB1. Interacts with host HDAC1; this interaction inhibits histone deacetylation and promotes viral transcription. Interacts with host HDAC2; this interaction inhibits histone deacetylation and promotes viral transcription. Interacts with host HDAC3; this interaction inhibits histone deacetylation and promotes viral transcription. Interacts with host PLSCR1; this interaction inhibits IE1 transactivating activity. Post-translationally, sumoylated by host PML/nuclear domain 10. Sumoylation abolishes the interaction with host STAT2 and thus the IE1-mediated repression of interferon-stimulated genes.

It localises to the host nucleus. In terms of biological role, plays an important role in transactivating viral early genes as well as activating its own promoter, probably by altering the viral chromatin structure. Expression of IE1 and IE2 proteins is critical for the establishment of lytic infection and reactivation from viral latency. Disrupts PML-associated ND10 nuclear bodies by interfering with host PML and SP100 sumoylation thereby altering the regulation of type I and type II interferon-induced gene expression. Promotes efficient viral growth by interacting with and directing host SP100 to degradation, leading to enhanced acetylation level of histones. In addition, functions in counteracting the host innate antiviral response. Inhibits the type I interferon pathway by directly interacting with and sequestrating host STAT2. Also targets type II interferon pathway by repressing IL6- and STAT3 target genes. Repression of STAT3 genes is due to STAT3 nuclear accumulation and disruption of IL6-induced STAT3 phosphorylation by IE1. This repression is followed by phosphorylation and activation of STAT1. Inhibits host ISG transcription by sequestering host ISGF3 in a PML- and STAT2- binding dependent manner. Alters host cell cycle progression, probably through its interaction with host E2F1 or RB1 that overcomes the RB1-mediated repression of E2F-responsive promoters. May act as a E3 ubiquitin ligase targeting several host proteins including HES1 and SP100A for ubiquitination and subsequent proteasomal degradation. Impairs the radial migration of immature neurons by downregulating Gap junction alpha-1 protein/GJA1 also via ubiquitination and degradation. The chain is Immediate early protein IE1 (UL123) from Human cytomegalovirus (strain Towne) (HHV-5).